The following is a 221-amino-acid chain: Phosphoribosylformylglycinamidine synthase subunit PurQ (221 aa).

Residues 6–221 (VGVVVFPGSN…LFTLKSLILK (216 aa)) enclose the Glutamine amidotransferase type-1 domain. The active-site Nucleophile is C89. Catalysis depends on residues H197 and E199.

As to quaternary structure, part of the FGAM synthase complex composed of 1 PurL, 1 PurQ and 2 PurS subunits.

Its subcellular location is the cytoplasm. The catalysed reaction is N(2)-formyl-N(1)-(5-phospho-beta-D-ribosyl)glycinamide + L-glutamine + ATP + H2O = 2-formamido-N(1)-(5-O-phospho-beta-D-ribosyl)acetamidine + L-glutamate + ADP + phosphate + H(+). The enzyme catalyses L-glutamine + H2O = L-glutamate + NH4(+). Its pathway is purine metabolism; IMP biosynthesis via de novo pathway; 5-amino-1-(5-phospho-D-ribosyl)imidazole from N(2)-formyl-N(1)-(5-phospho-D-ribosyl)glycinamide: step 1/2. In terms of biological role, part of the phosphoribosylformylglycinamidine synthase complex involved in the purines biosynthetic pathway. Catalyzes the ATP-dependent conversion of formylglycinamide ribonucleotide (FGAR) and glutamine to yield formylglycinamidine ribonucleotide (FGAM) and glutamate. The FGAM synthase complex is composed of three subunits. PurQ produces an ammonia molecule by converting glutamine to glutamate. PurL transfers the ammonia molecule to FGAR to form FGAM in an ATP-dependent manner. PurS interacts with PurQ and PurL and is thought to assist in the transfer of the ammonia molecule from PurQ to PurL. In Prochlorococcus marinus (strain MIT 9312), this protein is Phosphoribosylformylglycinamidine synthase subunit PurQ.